Reading from the N-terminus, the 417-residue chain is NADH-quinone oxidoreductase subunit D (417 aa).

It belongs to the complex I 49 kDa subunit family. In terms of assembly, NDH-1 is composed of 14 different subunits. Subunits NuoB, C, D, E, F, and G constitute the peripheral sector of the complex.

It localises to the cell inner membrane. The enzyme catalyses a quinone + NADH + 5 H(+)(in) = a quinol + NAD(+) + 4 H(+)(out). Functionally, NDH-1 shuttles electrons from NADH, via FMN and iron-sulfur (Fe-S) centers, to quinones in the respiratory chain. The immediate electron acceptor for the enzyme in this species is believed to be ubiquinone. Couples the redox reaction to proton translocation (for every two electrons transferred, four hydrogen ions are translocated across the cytoplasmic membrane), and thus conserves the redox energy in a proton gradient. This is NADH-quinone oxidoreductase subunit D from Paraburkholderia phytofirmans (strain DSM 17436 / LMG 22146 / PsJN) (Burkholderia phytofirmans).